Consider the following 221-residue polypeptide: Epididymal secretory glutathione peroxidase (221 aa).

The N-terminal stretch at 1 to 21 is a signal peptide; sequence MTTQLRVVHLLPLLLACFVQT. The active site involves C73.

The protein belongs to the glutathione peroxidase family. Epididymis.

The protein localises to the secreted. The enzyme catalyses 2 glutathione + H2O2 = glutathione disulfide + 2 H2O. In terms of biological role, protects cells and enzymes from oxidative damage, by catalyzing the reduction of hydrogen peroxide, lipid peroxides and organic hydroperoxide, by glutathione. May constitute a glutathione peroxidase-like protective system against peroxide damage in sperm membrane lipids. In Macaca fascicularis (Crab-eating macaque), this protein is Epididymal secretory glutathione peroxidase (GPX5).